Consider the following 254-residue polypeptide: uncharacterized protein (254 aa).

Helical transmembrane passes span 41 to 61 (VFVF…IKII), 64 to 84 (IFQA…EYFF), 91 to 111 (IYCG…LYIL), 125 to 145 (ILIG…FVLA), 146 to 166 (PAAL…LWSF), 172 to 192 (FILL…IQLL), 204 to 224 (MLLA…VLTP), and 232 to 252 (IIMS…LFLL).

It belongs to the TatC family.

The protein resides in the plastid. It localises to the chloroplast membrane. This is an uncharacterized protein from Porphyra purpurea (Red seaweed).